The sequence spans 422 residues: Enolase (422 aa).

Glutamine 162 provides a ligand contact to (2R)-2-phosphoglycerate. Glutamate 204 (proton donor) is an active-site residue. Residues aspartate 241, glutamate 285, and aspartate 312 each contribute to the Mg(2+) site. (2R)-2-phosphoglycerate contacts are provided by lysine 337, arginine 366, serine 367, and lysine 388. Lysine 337 acts as the Proton acceptor in catalysis.

The protein belongs to the enolase family. Mg(2+) is required as a cofactor.

Its subcellular location is the cytoplasm. It is found in the secreted. The protein resides in the cell surface. It catalyses the reaction (2R)-2-phosphoglycerate = phosphoenolpyruvate + H2O. The protein operates within carbohydrate degradation; glycolysis; pyruvate from D-glyceraldehyde 3-phosphate: step 4/5. Functionally, catalyzes the reversible conversion of 2-phosphoglycerate (2-PG) into phosphoenolpyruvate (PEP). It is essential for the degradation of carbohydrates via glycolysis. The protein is Enolase of Streptococcus thermophilus.